The primary structure comprises 112 residues: UPF0342 protein SGO_1370 (112 aa).

This sequence belongs to the UPF0342 family.

The polypeptide is UPF0342 protein SGO_1370 (Streptococcus gordonii (strain Challis / ATCC 35105 / BCRC 15272 / CH1 / DL1 / V288)).